A 148-amino-acid chain; its full sequence is Ribonuclease H (148 aa).

Positions 3–144 (DKEQVVIYTD…ADQLANRGVA (142 aa)) constitute an RNase H type-1 domain. Mg(2+)-binding residues include Asp-12, Glu-50, Asp-72, and Asp-136. Residues 125-148 (GHTGDPGNERADQLANRGVAELPR) form a disordered region.

The protein belongs to the RNase H family. In terms of assembly, monomer. It depends on Mg(2+) as a cofactor.

The protein resides in the cytoplasm. The enzyme catalyses Endonucleolytic cleavage to 5'-phosphomonoester.. Functionally, endonuclease that specifically degrades the RNA of RNA-DNA hybrids. The sequence is that of Ribonuclease H from Pseudomonas paraeruginosa (strain DSM 24068 / PA7) (Pseudomonas aeruginosa (strain PA7)).